Reading from the N-terminus, the 354-residue chain is Guanine nucleotide-binding protein G(i) subunit alpha-3 (354 aa).

A lipid anchor (N-myristoyl glycine) is attached at Gly2. A lipid anchor (S-palmitoyl cysteine) is attached at Cys3. A G-alpha domain is found at 32 to 354 (KEVKLLLLGA…KNNLKECGLY (323 aa)). Positions 35-48 (KLLLLGAGESGKST) are G1 motif. Positions 42, 43, 44, 45, 46, 47, 48, 150, 151, 175, 176, 177, 178, 179, 180, 181, 201, and 203 each coordinate GTP. Glu43, Ser44, Gly45, Lys46, Ser47, and Thr48 together coordinate GDP. Position 47 (Ser47) interacts with Mg(2+). Positions 151, 175, 176, 177, and 178 each coordinate GDP. A G2 motif region spans residues 173-181 (DVLRTRVKT). Arg178 bears the ADP-ribosylarginine; by cholera toxin mark. Thr181 contacts Mg(2+). The G3 motif stretch occupies residues 196 to 205 (FKMFDVGGQR). Gln204 carries the post-translational modification Deamidated glutamine; by Photorhabdus PAU_02230. A G4 motif region spans residues 265–272 (ILFLNKKD). GTP contacts are provided by Asn269, Lys270, Asp272, Leu273, Cys325, Ala326, and Thr327. GDP contacts are provided by Asn269, Lys270, and Asp272. The interval 324–329 (TCATDT) is G5 motif. Residues Cys325 and Ala326 each contribute to the GDP site. At Cys351 the chain carries ADP-ribosylcysteine; by pertussis toxin.

It belongs to the G-alpha family. G(i/o/t/z) subfamily. Heterotrimeric G proteins are composed of 3 units; alpha, beta and gamma. The alpha subunit contains the guanine nucleotide binding site. GTP binding causes dissociation of the heterotrimer, liberating the individual subunits so that they can interact with downstream effector proteins. Forms a complex with CCDC88A/GIV and EGFR which leads to enhanced EGFR signaling and triggering of cell migration; ligand stimulation is required for recruitment of GNAI3 to the complex. Interacts (inactive GDP-bound form) with CCDC88A/GIV (via GBA motif); the interaction leads to activation of GNAI3. Interacts (inactive GDP-bound form) with CCDC88C/DAPLE (via GBA motif); the interaction leads to activation of GNAI3. Interacts (inactive GDP-bound form) with NUCB1 (via GBA motif) and NUCB2 (via GBA motif); the interaction leads to activation of GNAI3. Interacts (inactive GDP-bound form) with PLCD4 (via GBA motif); the interaction leads to activation of GNAI3. Interacts with INSR; the interaction is probably mediated by CCDC88A/GIV. Interacts with GPSM1. Interacts (GDP-bound form) with GPSM2 (via GoLoco domains). Does not interact with RGS2. Interacts with RGS8 and RGS10; this strongly enhances the intrinsic GTPase activity. Interacts with RGS16; this strongly enhances the intrinsic GTPase activity. Interacts with RGS12. Interacts (via active GTP- or inactive GDP-bound form) with RGS14. Interacts (via active GTP-bound form) with TRPC5 (via ANK repeats) in a homotetrameric ion channel; the interaction is direct and activates the channel activity. Post-translationally, (Microbial infection) Deamidated at Gln-204 by Photorhabdus asymbiotica toxin PAU_02230, blocking GTP hydrolysis of heterotrimeric GNAQ or GNA11 and G-alphai (GNAI1, GNAI2 or GNAI3) proteins, thereby activating RhoA.

It is found in the cytoplasm. The protein resides in the cell membrane. The protein localises to the cytoskeleton. It localises to the microtubule organizing center. Its subcellular location is the centrosome. Heterotrimeric guanine nucleotide-binding proteins (G proteins) function as transducers downstream of G protein-coupled receptors (GPCRs) in numerous signaling cascades. The alpha chain contains the guanine nucleotide binding site and alternates between an active, GTP-bound state and an inactive, GDP-bound state. Signaling by an activated GPCR promotes GDP release and GTP binding. The alpha subunit has a low GTPase activity that converts bound GTP to GDP, thereby terminating the signal. Both GDP release and GTP hydrolysis are modulated by numerous regulatory proteins. Signaling is mediated via effector proteins, such as adenylate cyclase. Inhibits adenylate cyclase activity, leading to decreased intracellular cAMP levels. Stimulates the activity of receptor-regulated K(+) channels. The active GTP-bound form prevents the association of RGS14 with centrosomes and is required for the translocation of RGS14 from the cytoplasm to the plasma membrane. May play a role in cell division. The active GTP-bound form activates the calcium permeant TRPC5 ion channels. In Homo sapiens (Human), this protein is Guanine nucleotide-binding protein G(i) subunit alpha-3 (GNAI3).